A 111-amino-acid polypeptide reads, in one-letter code: Large ribosomal subunit protein uL22 (111 aa).

This sequence belongs to the universal ribosomal protein uL22 family. Part of the 50S ribosomal subunit.

Its function is as follows. This protein binds specifically to 23S rRNA; its binding is stimulated by other ribosomal proteins, e.g. L4, L17, and L20. It is important during the early stages of 50S assembly. It makes multiple contacts with different domains of the 23S rRNA in the assembled 50S subunit and ribosome. The globular domain of the protein is located near the polypeptide exit tunnel on the outside of the subunit, while an extended beta-hairpin is found that lines the wall of the exit tunnel in the center of the 70S ribosome. This is Large ribosomal subunit protein uL22 from Chlamydia muridarum (strain MoPn / Nigg).